Consider the following 4427-residue polypeptide: Dynein axonemal heavy chain 2 (4427 aa).

A disordered region spans residues 1–73; it reads MSSKAEKKQR…AQSEESVEPE (73 aa). Residues 1 to 1764 form a stem region; it reads MSSKAEKKQR…VIRQTNTQFQ (1764 aa). A compositionally biased stretch (polar residues) spans 14 to 23; sequence RGSSQASWSG. The span at 50 to 59 shows a compositional bias: basic and acidic residues; the sequence is LPKEEPEPRL. A TPR 1 repeat occupies 1404–1439; sequence EDNQVALSTMKASRFVKAFEKDVDHWERCLSLILEV. AAA regions lie at residues 1765-1986, 2046-2273, 2378-2625, and 2722-2974; these read YNYE…LLRY, ETVE…DNCK, RYPP…VFQG, and EYNL…LRRH. ATP-binding positions include 1803-1810, 2084-2091, and 2416-2423; these read GPAGTGKT, GCTGSGKT, and GPVGTGKT. One copy of the TPR 2 repeat lies at 2721–2754; that stretch reads NEYNLSPSVVPMQLVLFREAIEHITRIVRVIGQP. 2762–2769 serves as a coordination point for ATP; sequence GIGGSGRQ. Positions 2989–3272 are stalk; sequence YKKLLGEKRQ…EELRKKSEEM (284 aa). A coiled-coil region spans residues 3012–3049; sequence FKIDETREKVQVMSLELEDAKKKVAEFQKQCEEYLVII. A TPR 3 repeat occupies 3072-3105; sequence VEEIKCQALADNAQKDLEEALPALEEAMRALESL. Coiled coils occupy residues 3216-3304 and 3523-3567; these read KRIR…EEDL and VRKE…GSLL. AAA stretches follow at residues 3358 to 3588 and 3804 to 4023; these read LCNP…EVTE and VTSF…LLSL. TPR repeat units follow at residues 4072-4104 and 4105-4140; these read STPF…LLPG and MDPP…QPQI.

The protein belongs to the dynein heavy chain family. In terms of assembly, part of the axonemal inner dynein arm complex that consists of at least two heavy chains and a number of intermediate and light chains. Interacts with DNAI4. In terms of tissue distribution, expressed primarily in trachea and testis, 2 tissues containing axonemal structures. Also expressed in lung. Expressed in spermatozoa (at protein level).

The protein resides in the cytoplasm. Its subcellular location is the cytoskeleton. The protein localises to the cilium axoneme. It is found in the flagellum axoneme. Its function is as follows. As part of the axonemal inner dynein arm complex plays a central role in ciliary beat. Expressed in sperm flagellum, it is required for sperm motility. Dyneins are microtubule-based molecular motors possessing ATPase activities that can convert the chemical energy of ATP into relative sliding between adjacent microtubule doublets to generate ciliary bending. This is Dynein axonemal heavy chain 2 from Homo sapiens (Human).